The following is a 253-amino-acid chain: Indole-3-glycerol phosphate synthase (253 aa).

This sequence belongs to the TrpC family.

It carries out the reaction 1-(2-carboxyphenylamino)-1-deoxy-D-ribulose 5-phosphate + H(+) = (1S,2R)-1-C-(indol-3-yl)glycerol 3-phosphate + CO2 + H2O. It functions in the pathway amino-acid biosynthesis; L-tryptophan biosynthesis; L-tryptophan from chorismate: step 4/5. The protein is Indole-3-glycerol phosphate synthase of Petrotoga mobilis (strain DSM 10674 / SJ95).